We begin with the raw amino-acid sequence, 364 residues long: Peptidoglycan transport system permease protein YejB (364 aa).

Helical transmembrane passes span 9 to 29 (LALM…VIQF), 134 to 154 (SASL…PLGI), 171 to 191 (IIII…IVLF), 219 to 239 (IIDY…SAFA), 283 to 303 (IVIA…SLLI), and 325 to 345 (YPIV…VGLL). Positions 131-350 (LPVSASLGFW…VVGLLSDLIY (220 aa)) constitute an ABC transmembrane type-1 domain.

Belongs to the binding-protein-dependent transport system permease family. As to quaternary structure, the complex is composed of one ATP-binding protein (YejF), two transmembrane proteins (YejB and YejE) and a solute-binding protein (YepA or YejA).

The protein resides in the cell inner membrane. Its function is as follows. Part of the ABC transporter complex YejBEF-YepA involved in the uptake of muropeptides, the breakdown products of cell wall peptidoglycan. The import of muropeptides into the cell enables peptidoglycan recycling, which is vital for cell wall integrity in this bacterium. Is also probably part of the ABC transporter complex YejABEF, which is likely involved in broad-spectrum peptide import. Responsible for the translocation of the substrate across the membrane. The chain is Peptidoglycan transport system permease protein YejB from Agrobacterium fabrum (strain C58 / ATCC 33970) (Agrobacterium tumefaciens (strain C58)).